The primary structure comprises 279 residues: Energy-coupling factor transporter ATP-binding protein EcfA1 (279 aa).

Residues 5-240 (IELNNIQFNY…GEALVEMGLD (236 aa)) enclose the ABC transporter domain. An ATP-binding site is contributed by 40–47 (GHNGSGKS).

Belongs to the ABC transporter superfamily. Energy-coupling factor EcfA family. In terms of assembly, forms a stable energy-coupling factor (ECF) transporter complex composed of 2 membrane-embedded substrate-binding proteins (S component), 2 ATP-binding proteins (A component) and 2 transmembrane proteins (T component).

The protein resides in the cell membrane. Functionally, ATP-binding (A) component of a common energy-coupling factor (ECF) ABC-transporter complex. Unlike classic ABC transporters this ECF transporter provides the energy necessary to transport a number of different substrates. The protein is Energy-coupling factor transporter ATP-binding protein EcfA1 of Enterococcus faecalis (strain ATCC 700802 / V583).